Consider the following 233-residue polypeptide: Phycoerythrobilin synthase (233 aa).

It belongs to the HY2 family.

It carries out the reaction (3Z)-phycoerythrobilin + 2 oxidized 2[4Fe-4S]-[ferredoxin] = biliverdin IXalpha + 2 reduced 2[4Fe-4S]-[ferredoxin] + 4 H(+). Its function is as follows. Plays a role in phycoerythrobilin biosynthesis, the red pigment chromophore photosynthetically active biliproteins of the host cyanobacteria. Uses a four-electron reduction to carry out the reactions catalyzed by two enzymes (EC 1.3.7.2 and EC 1.3.7.3) in host. The sequence is that of Phycoerythrobilin synthase (pebS) from Prochlorococcus.